A 279-amino-acid polypeptide reads, in one-letter code: NAD kinase (279 aa).

Residue aspartate 63 is the Proton acceptor of the active site. NAD(+) is bound by residues 63–64 (DG), arginine 68, 133–134 (NE), and aspartate 163.

The protein belongs to the NAD kinase family. The cofactor is a divalent metal cation.

The protein resides in the cytoplasm. It carries out the reaction NAD(+) + ATP = ADP + NADP(+) + H(+). Its function is as follows. Involved in the regulation of the intracellular balance of NAD and NADP, and is a key enzyme in the biosynthesis of NADP. Catalyzes specifically the phosphorylation on 2'-hydroxyl of the adenosine moiety of NAD to yield NADP. The polypeptide is NAD kinase (Protochlamydia amoebophila (strain UWE25)).